The primary structure comprises 441 residues: Proline--tRNA ligase (441 aa).

This sequence belongs to the class-II aminoacyl-tRNA synthetase family. ProS type 2 subfamily. As to quaternary structure, homodimer.

The protein localises to the cytoplasm. It catalyses the reaction tRNA(Pro) + L-proline + ATP = L-prolyl-tRNA(Pro) + AMP + diphosphate. Catalyzes the attachment of proline to tRNA(Pro) in a two-step reaction: proline is first activated by ATP to form Pro-AMP and then transferred to the acceptor end of tRNA(Pro). The chain is Proline--tRNA ligase from Bartonella bacilliformis (strain ATCC 35685 / KC583 / Herrer 020/F12,63).